We begin with the raw amino-acid sequence, 265 residues long: Mlc titration factor A (265 aa).

Zn(2+) contacts are provided by His-111, His-148, His-152, and Glu-211.

Belongs to the MtfA family. Interacts with Mlc. It depends on Zn(2+) as a cofactor.

It is found in the cytoplasm. Its function is as follows. Involved in the modulation of the activity of the glucose-phosphotransferase system (glucose-PTS). Interacts with the transcriptional repressor Mlc, preventing its interaction with DNA and leading to the modulation of expression of genes regulated by Mlc, including ptsG, which encodes the PTS system glucose-specific EIICB component. In terms of biological role, shows zinc-dependent metallopeptidase activity. The protein is Mlc titration factor A of Escherichia coli (strain UTI89 / UPEC).